Reading from the N-terminus, the 820-residue chain is Leucine--tRNA ligase (820 aa).

A 'HIGH' region motif is present at residues Pro40 to His51. Positions Lys601–Ser605 match the 'KMSKS' region motif. Lys604 provides a ligand contact to ATP.

It belongs to the class-I aminoacyl-tRNA synthetase family.

Its subcellular location is the cytoplasm. It catalyses the reaction tRNA(Leu) + L-leucine + ATP = L-leucyl-tRNA(Leu) + AMP + diphosphate. This chain is Leucine--tRNA ligase, found in Chlamydia caviae (strain ATCC VR-813 / DSM 19441 / 03DC25 / GPIC) (Chlamydophila caviae).